A 406-amino-acid chain; its full sequence is Mitochondrial potassium channel (406 aa).

Residues 1–35 (MTGCSPVFAMQHVVGVPRILVRRTFLGTDVTMTRT) constitute a mitochondrion transit peptide. Residues 36–198 (LCSPGPREKR…KERTRAERTK (163 aa)) are Mitochondrial matrix-facing. Residues 113-140 (VREAREGLEAQQTKLKEVRDRLDRVSRE) are a coiled coil. A helical transmembrane segment spans residues 199–219 (NWSLIGSVLGALIGVAGSTYV). At 220 to 382 (NRVRLQELKA…LEAQANRNTV (163 aa)) the chain is on the mitochondrial intermembrane side. Residues 383 to 403 (SSTLVTCVTFLATLPLLYMLF) traverse the membrane as a helical segment. Residues 404–406 (KTS) are Mitochondrial matrix-facing.

As to quaternary structure, the mitochondrial potassium channel (mitoK(ATP)) is composed of 4 subunits of CCDC51/MITOK and 4 subunits of ABCB8/MITOSUR.

The protein resides in the mitochondrion inner membrane. It carries out the reaction K(+)(in) = K(+)(out). Its activity is regulated as follows. Inhibited by ATP via mitoK(ATP) channel. Its function is as follows. Pore-forming subunit of the mitochondrial ATP-gated potassium channel (mitoK(ATP)). Together with ATP-binding subunit ABCB8/MITOSUR of the mitoK(ATP) channel, mediates ATP-dependent K(+) currents across the mitochondrial inner membrane. An increase in ATP intracellular levels closes the channel, inhibiting K(+) transport, whereas a decrease in ATP levels enhances K(+) uptake in the mitochondrial matrix. May contribute to the homeostatic control of cellular metabolism under stress conditions by regulating the mitochondrial matrix volume. This is Mitochondrial potassium channel from Mus musculus (Mouse).